Consider the following 602-residue polypeptide: Elongation factor 4 (602 aa).

The tr-type G domain maps to 8 to 189 (KNIRNFSIIA…KIITTIPAPS (182 aa)). Residues 20–25 (DHGKST) and 136–139 (NKID) contribute to the GTP site.

It belongs to the TRAFAC class translation factor GTPase superfamily. Classic translation factor GTPase family. LepA subfamily.

The protein localises to the cell inner membrane. It catalyses the reaction GTP + H2O = GDP + phosphate + H(+). Required for accurate and efficient protein synthesis under certain stress conditions. May act as a fidelity factor of the translation reaction, by catalyzing a one-codon backward translocation of tRNAs on improperly translocated ribosomes. Back-translocation proceeds from a post-translocation (POST) complex to a pre-translocation (PRE) complex, thus giving elongation factor G a second chance to translocate the tRNAs correctly. Binds to ribosomes in a GTP-dependent manner. The chain is Elongation factor 4 from Helicobacter pylori (strain HPAG1).